A 261-amino-acid polypeptide reads, in one-letter code: Protein-ADP-ribose hydrolase (261 aa).

In terms of domain architecture, Macro spans 74 to 261 (ADLKPVTGRG…DEALYNKLMS (188 aa)). ADP-D-ribose is bound by residues D93, I94, and N107. Residues C113, H118, and C120 each contribute to the Zn(2+) site. Positions 120, 121, 122, 211, 212, 213, and 215 each coordinate ADP-D-ribose.

This sequence belongs to the MacroD-type family. Zn-Macro subfamily. Zn(2+) is required as a cofactor.

The enzyme catalyses 4-O-(ADP-D-ribosyl)-L-aspartyl-[protein] + H2O = L-aspartyl-[protein] + ADP-D-ribose + H(+). Its function is as follows. ADP-ribosylhydrolase that specifically reverses the SirTM-mediated mono-ADP-ribosylation at an asparatate residue of GcvH-L, by releasing ADP-ribose from the target protein. May play a role in the regulation of the response to host-induced oxidative stress. The sequence is that of Protein-ADP-ribose hydrolase from Treponema medium.